The primary structure comprises 401 residues: Phosrestin-1 (401 aa).

Position 366 is a phosphoserine; by CaMK (S366).

This sequence belongs to the arrestin family. Post-translationally, phosphorylated upon light exposure. In terms of tissue distribution, expressed in photoreceptor cells.

The protein resides in the cell projection. Its subcellular location is the rhabdomere. Its function is as follows. Regulates photoreceptor cell deactivation. Arr1 and Arr2 proteins are mediators of rhodopsin inactivation and are essential for the termination of the phototransduction cascade. Involved in regulating normal cycles of per nuclear accumulation in brain circadian neurons and thus is important for normal circadian behavior. In the dark, functions with Arr1 to promote the formation of cytosolic Bdbt foci, which are required for dco localization to photoreceptor nuclei where it phosphorylates and activates degradation of per. The protein is Phosrestin-1 (Arr2) of Drosophila melanogaster (Fruit fly).